The sequence spans 165 residues: 3-isopropylmalate dehydratase small subunit (165 aa).

Belongs to the LeuD family. LeuD type 2 subfamily. As to quaternary structure, heterodimer of LeuC and LeuD.

It catalyses the reaction (2R,3S)-3-isopropylmalate = (2S)-2-isopropylmalate. It functions in the pathway amino-acid biosynthesis; L-leucine biosynthesis; L-leucine from 3-methyl-2-oxobutanoate: step 2/4. Catalyzes the isomerization between 2-isopropylmalate and 3-isopropylmalate, via the formation of 2-isopropylmaleate. The protein is 3-isopropylmalate dehydratase small subunit of Helicobacter hepaticus (strain ATCC 51449 / 3B1).